The sequence spans 304 residues: Ribonuclease Z (304 aa).

Positions 64, 66, 68, 69, 141, 209, and 267 each coordinate Zn(2+). The active-site Proton acceptor is aspartate 68.

It belongs to the RNase Z family. As to quaternary structure, homodimer. The cofactor is Zn(2+).

The catalysed reaction is Endonucleolytic cleavage of RNA, removing extra 3' nucleotides from tRNA precursor, generating 3' termini of tRNAs. A 3'-hydroxy group is left at the tRNA terminus and a 5'-phosphoryl group is left at the trailer molecule.. Its function is as follows. Zinc phosphodiesterase, which displays some tRNA 3'-processing endonuclease activity. Probably involved in tRNA maturation, by removing a 3'-trailer from precursor tRNA. The protein is Ribonuclease Z of Thermoplasma volcanium (strain ATCC 51530 / DSM 4299 / JCM 9571 / NBRC 15438 / GSS1).